The following is a 181-amino-acid chain: Crustacyanin-A1 subunit (181 aa).

3 disulfides stabilise this stretch: Cys12–Cys121, Cys51–Cys173, and Cys117–Cys150.

It belongs to the calycin superfamily. Lipocalin family. As to quaternary structure, oligomer; Can form dimers (beta-crustacyanin); or complexes of 16 subunits (alpha-crustacyanin). There are five types of subunits: A1, A2, A3, C1 and C2. As to expression, found in the carapace.

It localises to the secreted. It is found in the extracellular space. Binds the carotenoid astaxanthin (AXT) which provides the blue coloration to the carapace of the lobster. The polypeptide is Crustacyanin-A1 subunit (Homarus gammarus (European lobster)).